Here is a 409-residue protein sequence, read N- to C-terminus: MKRQNVRTLALIVCTFTYLLVGAAVFDALESEPEMIERQRLELRQLELRARYNLSEGGYEELERVVLRLKPHKAGVQWRFAGSFYFAITVITTIGYGHAAPSTDGGKVFCMFYALLGIPLTLVMFQSLGERINTFVRYLLHRAKRGLGMRHAEVSMANMVLIGFVSCISTLCIGAAAFSYYERWTFFQAYYYCFITLTTIGFGDYVALQKDQALQTQPQYVAFSFVYILTGLTVIGAFLNLVVLRFMTMNAEDEKRDAEHRALLTHNGQAVGLGGLSCLSGSLGDGVRPRDPVTCAAAAGGVGVGVGGSGFRNVYAEVLHFQSMCSCLWYKSREKLQYSIPMIIPRDLSTSDTCVEHSHSSPGGGGRYSDTPSHPCLCSGTQRSAISSVSTGLHSLAAFRGLMKRRSSV.

The Cytoplasmic portion of the chain corresponds to 1–8 (MKRQNVRT). The helical transmembrane segment at 9 to 29 (LALIVCTFTYLLVGAAVFDAL) threads the bilayer. The N-linked (GlcNAc...) asparagine glycan is linked to asparagine 53. The segment at residues 78 to 101 (WRFAGSFYFAITVITTIGYGHAAP) is an intramembrane region (pore-forming). Residues 108 to 128 (VFCMFYALLGIPLTLVMFQSL) form a helical membrane-spanning segment. At 129–158 (GERINTFVRYLLHRAKRGLGMRHAEVSMAN) the chain is on the cytoplasmic side. Residues 159–179 (MVLIGFVSCISTLCIGAAAFS) traverse the membrane as a helical segment. The segment at residues 184-207 (WTFFQAYYYCFITLTTIGFGDYVA) is an intramembrane region (pore-forming). A helical transmembrane segment spans residues 223 to 243 (FSFVYILTGLTVIGAFLNLVV). Residues 244–409 (LRFMTMNAED…RGLMKRRSSV (166 aa)) are Cytoplasmic-facing.

This sequence belongs to the two pore domain potassium channel (TC 1.A.1.8) family. In terms of assembly, homodimer. Heterodimer with KCNK1. Heterodimer with KCNK9. Very strong expression in heart, also detected in kidney, brain, skin, testis, lung, skeletal muscle, small intestine and stomach. Not detected in liver, thymus or spleen. Expressed in adrenal glands mainly in zona glomerulosa and zona fasciculata of the cortex. Expressed at higher levels in brown and beige than in white adipocytes.

Its subcellular location is the cell membrane. It catalyses the reaction K(+)(in) = K(+)(out). It carries out the reaction Na(+)(in) = Na(+)(out). Activated by halothane and isoflurane. Inhibited by external acidification, diacylglycerol and anandamide. Inactivated by barium. K(+) channel that conducts voltage-dependent outward rectifying currents upon membrane depolarization. Voltage sensing is coupled to K(+) electrochemical gradient in an 'ion flux gating' mode where outward but not inward ion flow opens the gate. Changes ion selectivity and becomes permeable to Na(+) ions in response to extracellular acidification. Protonation of the pH sensor His-98 stabilizes C-type inactivation conformation likely converting the channel from outward K(+)-conducting, to inward Na(+)-conducting to nonconductive state. Homo- and heterodimerizes to form functional channels with distinct regulatory and gating properties. Allows K(+) currents with fast-gating kinetics important for the repolarization and hyperpolarization phases of action potentials. In cerebellar granule cells, heteromeric KCNK3:KCNK9 channel may hyperpolarize the resting membrane potential to limit intrinsic neuronal excitability, but once the action potential threshold is reached, it may support high-frequency action potential firing and increased neuronal excitability. Dispensable for central chemosensory respiration i.e. breathing controlled by brainstem CO2/pH, it rather conducts pH-sensitive currents and controls the firing rate of serotonergic raphe neurons involved in potentiation of the respiratory chemoreflex. Additionally, imparts chemosensitivity to type 1 cells in carotid bodies which respond to a decrease in arterial oxygen pressure or an increase in carbon dioxide pressure or pH to initiate adaptive changes in pulmonary ventilation. In adrenal gland, contributes to the maintenance of a hyperpolarized resting membrane potential of aldosterone-producing cells at zona glomerulosa and limits aldosterone release as part of a regulatory mechanism that controls arterial blood pressure and electrolyte homeostasis. In brown adipocytes, mediates K(+) efflux that counteracts norepinephrine-induced membrane depolarization, limits Ca(2+) efflux and downstream cAMP and PKA signaling, ultimately attenuating lipid oxidation and adaptive thermogenesis. This Mus musculus (Mouse) protein is Potassium channel subfamily K member 3.